A 313-amino-acid chain; its full sequence is Homoserine O-succinyltransferase (313 aa).

Cys-142 (acyl-thioester intermediate) is an active-site residue. Substrate-binding residues include Lys-163 and Ser-192. The active-site Proton acceptor is the His-235. Glu-237 is an active-site residue. Arg-249 provides a ligand contact to substrate.

It belongs to the MetA family.

The protein localises to the cytoplasm. It carries out the reaction L-homoserine + succinyl-CoA = O-succinyl-L-homoserine + CoA. It functions in the pathway amino-acid biosynthesis; L-methionine biosynthesis via de novo pathway; O-succinyl-L-homoserine from L-homoserine: step 1/1. Transfers a succinyl group from succinyl-CoA to L-homoserine, forming succinyl-L-homoserine. This Shewanella sp. (strain ANA-3) protein is Homoserine O-succinyltransferase.